A 247-amino-acid chain; its full sequence is tRNA (guanine-N(1)-)-methyltransferase (247 aa).

Residues Gly112 and 131 to 136 each bind S-adenosyl-L-methionine; that span reads LGDFVL.

It belongs to the RNA methyltransferase TrmD family. Homodimer.

It localises to the cytoplasm. It carries out the reaction guanosine(37) in tRNA + S-adenosyl-L-methionine = N(1)-methylguanosine(37) in tRNA + S-adenosyl-L-homocysteine + H(+). Functionally, specifically methylates guanosine-37 in various tRNAs. The chain is tRNA (guanine-N(1)-)-methyltransferase from Syntrophotalea carbinolica (strain DSM 2380 / NBRC 103641 / GraBd1) (Pelobacter carbinolicus).